Consider the following 343-residue polypeptide: Anthranilate phosphoribosyltransferase (343 aa).

5-phospho-alpha-D-ribose 1-diphosphate contacts are provided by residues Gly-84, 87–88 (GD), Thr-92, 94–97 (NIST), 112–120 (KHGNRGVSS), and Ser-124. Position 84 (Gly-84) interacts with anthranilate. Ser-96 contributes to the Mg(2+) binding site. Position 115 (Asn-115) interacts with anthranilate. Arg-170 is an anthranilate binding site. Mg(2+)-binding residues include Asp-229 and Glu-230.

Belongs to the anthranilate phosphoribosyltransferase family. In terms of assembly, homodimer. The cofactor is Mg(2+).

The enzyme catalyses N-(5-phospho-beta-D-ribosyl)anthranilate + diphosphate = 5-phospho-alpha-D-ribose 1-diphosphate + anthranilate. The protein operates within amino-acid biosynthesis; L-tryptophan biosynthesis; L-tryptophan from chorismate: step 2/5. Catalyzes the transfer of the phosphoribosyl group of 5-phosphorylribose-1-pyrophosphate (PRPP) to anthranilate to yield N-(5'-phosphoribosyl)-anthranilate (PRA). This chain is Anthranilate phosphoribosyltransferase, found in Burkholderia vietnamiensis (strain G4 / LMG 22486) (Burkholderia cepacia (strain R1808)).